Reading from the N-terminus, the 127-residue chain is Holo-[acyl-carrier-protein] synthase (127 aa).

Aspartate 8 and glutamate 57 together coordinate Mg(2+).

This sequence belongs to the P-Pant transferase superfamily. AcpS family. Requires Mg(2+) as cofactor.

The protein resides in the cytoplasm. The enzyme catalyses apo-[ACP] + CoA = holo-[ACP] + adenosine 3',5'-bisphosphate + H(+). Functionally, transfers the 4'-phosphopantetheine moiety from coenzyme A to a Ser of acyl-carrier-protein. The polypeptide is Holo-[acyl-carrier-protein] synthase (Vesicomyosocius okutanii subsp. Calyptogena okutanii (strain HA)).